We begin with the raw amino-acid sequence, 528 residues long: Phosphoenolpyruvate carboxykinase (ATP) (528 aa).

The substrate site is built by arginine 56, tyrosine 192, and lysine 198. Residues lysine 198, histidine 217, and 233-241 (GLSGTGKTT) contribute to the ATP site. Mn(2+) contacts are provided by lysine 198 and histidine 217. Aspartate 254 serves as a coordination point for Mn(2+). ATP is bound by residues glutamate 282, arginine 319, and threonine 444. A substrate-binding site is contributed by arginine 319.

It belongs to the phosphoenolpyruvate carboxykinase (ATP) family. It depends on Mn(2+) as a cofactor.

It localises to the cytoplasm. The enzyme catalyses oxaloacetate + ATP = phosphoenolpyruvate + ADP + CO2. It participates in carbohydrate biosynthesis; gluconeogenesis. Its function is as follows. Involved in the gluconeogenesis. Catalyzes the conversion of oxaloacetate (OAA) to phosphoenolpyruvate (PEP) through direct phosphoryl transfer between the nucleoside triphosphate and OAA. This chain is Phosphoenolpyruvate carboxykinase (ATP), found in Bacillus pumilus (strain SAFR-032).